The primary structure comprises 408 residues: S100P-binding protein (408 aa).

Disordered stretches follow at residues 1 to 111 (MMCS…AETP), 162 to 234 (KDET…SENP), and 271 to 291 (VSTS…MKGH). The segment covering 28–59 (SLDEDGLDDSLLELSEGEEDDGDVNYTEEEID) has biased composition (acidic residues). Basic and acidic residues-rich tracts occupy residues 77 to 86 (DGGHVEKGER) and 162 to 185 (KDET…REDG). Ser-187 is modified (phosphoserine). Positions 188-234 (PNESKLCTESEGISPNNSAWNGPQLSSSNNNFQQTVSDKNMPDSENP) are enriched in polar residues. Over residues 280 to 291 (VLNKDSGKMKGH) the composition is skewed to basic and acidic residues.

Interacts with S100P. As to expression, expressed in brain, spleen, and lung. Not detected in pancreas or liver. In pancreas, expressed predominantly in islet cells and to a lesser extent in acinar cells, but not expressed in ductal cells. Up-regulated in various pancreatic ductal adenocarcinomas and pancreatic intraepithelial neoplasias. Detected in pancreatic ductal adenocarcinoma cells (at protein level). Not detected in non-neoplastic ductal epithelium (at protein level).

The protein resides in the nucleus. In Homo sapiens (Human), this protein is S100P-binding protein.